The chain runs to 82 residues: MAVKERVGVVVSDKMQKTVVVAVENRAPHPKYGKIVVKTRRYKAHDENNEAKVGDRVRIRETRPLSRTKRWVIAEILSPRTA.

It belongs to the universal ribosomal protein uS17 family. In terms of assembly, part of the 30S ribosomal subunit.

In terms of biological role, one of the primary rRNA binding proteins, it binds specifically to the 5'-end of 16S ribosomal RNA. In Thermosynechococcus vestitus (strain NIES-2133 / IAM M-273 / BP-1), this protein is Small ribosomal subunit protein uS17.